The primary structure comprises 386 residues: Bifunctional enzyme IspD/IspF (386 aa).

The interval 1 to 230 is 2-C-methyl-D-erythritol 4-phosphate cytidylyltransferase; it reads MIRDERVAAI…RARSILEAPV (230 aa). Residues 231–386 form a 2-C-methyl-D-erythritol 2,4-cyclodiphosphate synthase region; that stretch reads AMGVGYDTHR…HAVALLVRVR (156 aa). Asp237 and His239 together coordinate a divalent metal cation. Residues 237–239 and 262–263 each bind 4-CDP-2-C-methyl-D-erythritol 2-phosphate; these read DTH and HS. Position 270 (His270) interacts with a divalent metal cation. 4-CDP-2-C-methyl-D-erythritol 2-phosphate is bound by residues 284 to 286, 289 to 293, 360 to 363, Phe367, and Arg370; these read DLG, FPDTD, and TTGE.

It in the N-terminal section; belongs to the IspD/TarI cytidylyltransferase family. IspD subfamily. This sequence in the C-terminal section; belongs to the IspF family. It depends on a divalent metal cation as a cofactor.

It catalyses the reaction 2-C-methyl-D-erythritol 4-phosphate + CTP + H(+) = 4-CDP-2-C-methyl-D-erythritol + diphosphate. The catalysed reaction is 4-CDP-2-C-methyl-D-erythritol 2-phosphate = 2-C-methyl-D-erythritol 2,4-cyclic diphosphate + CMP. It participates in isoprenoid biosynthesis; isopentenyl diphosphate biosynthesis via DXP pathway; isopentenyl diphosphate from 1-deoxy-D-xylulose 5-phosphate: step 2/6. It functions in the pathway isoprenoid biosynthesis; isopentenyl diphosphate biosynthesis via DXP pathway; isopentenyl diphosphate from 1-deoxy-D-xylulose 5-phosphate: step 4/6. Functionally, bifunctional enzyme that catalyzes the formation of 4-diphosphocytidyl-2-C-methyl-D-erythritol from CTP and 2-C-methyl-D-erythritol 4-phosphate (MEP) (IspD), and catalyzes the conversion of 4-diphosphocytidyl-2-C-methyl-D-erythritol 2-phosphate (CDP-ME2P) to 2-C-methyl-D-erythritol 2,4-cyclodiphosphate (ME-CPP) with a corresponding release of cytidine 5-monophosphate (CMP) (IspF). This is Bifunctional enzyme IspD/IspF from Anaeromyxobacter sp. (strain Fw109-5).